Reading from the N-terminus, the 129-residue chain is Small ribosomal subunit protein uS11 (129 aa).

Belongs to the universal ribosomal protein uS11 family. As to quaternary structure, part of the 30S ribosomal subunit. Interacts with proteins S7 and S18. Binds to IF-3.

In terms of biological role, located on the platform of the 30S subunit, it bridges several disparate RNA helices of the 16S rRNA. Forms part of the Shine-Dalgarno cleft in the 70S ribosome. This is Small ribosomal subunit protein uS11 from Nitrosomonas eutropha (strain DSM 101675 / C91 / Nm57).